A 439-amino-acid polypeptide reads, in one-letter code: F-box/FBD/LRR-repeat protein At5g56570 (439 aa).

The F-box domain maps to 35–81 (PTELSDMPDDLIFKIFSFLPFFKEDLATRFISEYGKGLWNPDPNAIF). 2 LRR repeats span residues 155 to 177 (CTTL…WFRL) and 223 to 246 (VPTL…SFWI). The FBD domain maps to 361–411 (VWEKPTVVPECLSTRLEILKWRDYEGTEHEKDMVGYILANATFLQRATFST).

The sequence is that of F-box/FBD/LRR-repeat protein At5g56570 from Arabidopsis thaliana (Mouse-ear cress).